Here is a 252-residue protein sequence, read N- to C-terminus: F-box protein At5g39250 (252 aa).

Residues methionine 1–glutamine 42 form the F-box domain.

The sequence is that of F-box protein At5g39250 from Arabidopsis thaliana (Mouse-ear cress).